The primary structure comprises 521 residues: NAD(P)H-quinone oxidoreductase subunit 2 (521 aa).

The next 14 membrane-spanning stretches (helical) occupy residues 14–34 (VILP…TDLI), 42–62 (LTPA…TLQW), 79–99 (LSIV…LLSI), 109–129 (LGEF…LSGA), 132–152 (LVTI…LTGY), 167–187 (LLIG…LYGL), 207–227 (LALL…ISAV), 241–261 (PTPI…ALAI), 275–295 (WHFV…VVAL), 303–323 (LLAY…IAGT), 331–351 (VYYL…VILF), 375–395 (LGLS…GFFG), 397–417 (LYLF…LALI), and 463–483 (AGLV…NPLF).

This sequence belongs to the complex I subunit 2 family. As to quaternary structure, NDH-1 can be composed of about 15 different subunits; different subcomplexes with different compositions have been identified which probably have different functions.

It localises to the cellular thylakoid membrane. It catalyses the reaction a plastoquinone + NADH + (n+1) H(+)(in) = a plastoquinol + NAD(+) + n H(+)(out). The catalysed reaction is a plastoquinone + NADPH + (n+1) H(+)(in) = a plastoquinol + NADP(+) + n H(+)(out). In terms of biological role, NDH-1 shuttles electrons from an unknown electron donor, via FMN and iron-sulfur (Fe-S) centers, to quinones in the respiratory and/or the photosynthetic chain. The immediate electron acceptor for the enzyme in this species is believed to be plastoquinone. Couples the redox reaction to proton translocation, and thus conserves the redox energy in a proton gradient. Cyanobacterial NDH-1 also plays a role in inorganic carbon-concentration. The polypeptide is NAD(P)H-quinone oxidoreductase subunit 2 (Synechococcus elongatus (strain ATCC 33912 / PCC 7942 / FACHB-805) (Anacystis nidulans R2)).